A 659-amino-acid chain; its full sequence is Exocyst complex component 5 (659 aa).

Positions 1-58 form a coiled coil; sequence MRFEEEIGSLQMLCDQFQNKINTLEKQMNEEKKDYVQKLHRLHEKNGEAIDKMKQLDH.

It belongs to the SEC10 family. In terms of assembly, the exocyst complex is composed of sec-3/exoc1, sec-5/exoc2, sec-6/exoc3, sec-8/exoc4, sec-10/exoc5, sec-15/exoc6, exo-70/exoc7 and exo-84/exoc8.

Component of the exocyst complex involved in the docking of exocytic vesicles with fusion sites on the plasma membrane. In Caenorhabditis elegans, this protein is Exocyst complex component 5 (sec-10).